A 431-amino-acid chain; its full sequence is Probable carboxylic ester hydrolase LipM (431 aa).

The next 3 membrane-spanning stretches (helical) occupy residues 7–27, 38–58, and 75–95; these read IHVIRQIGALVVAAVTAAATI, FASLWSWFIGLVVTEFPLPTL, and PVRAVSWLVAAFSALGLLNLS. Catalysis depends on residues Ser-261, Asp-357, and His-390.

This sequence belongs to the 'GDXG' lipolytic enzyme family.

It is found in the membrane. The chain is Probable carboxylic ester hydrolase LipM from Mycobacterium tuberculosis (strain ATCC 25618 / H37Rv).